We begin with the raw amino-acid sequence, 1939 residues long: Myosin-1 (1939 aa).

A Myosin N-terminal SH3-like domain is found at 33 to 82; that stretch reads DAKTSVFVAEPKESFVKGTVQSREGGKVTVKTEAGATLTVKEDQVFPMNP. 2 positions are modified to phosphothreonine: threonine 64 and threonine 69. Residues 86–782 form the Myosin motor domain; that stretch reads DKIEDMAMMT…LLGLLEEMRD (697 aa). Lysine 130 carries the post-translational modification N6,N6,N6-trimethyllysine. 179-186 provides a ligand contact to ATP; sequence GESGAGKT. Tyrosine 389 carries the post-translational modification Phosphotyrosine. Residue serine 392 is modified to Phosphoserine. At threonine 419 the chain carries Phosphothreonine. At tyrosine 424 the chain carries Phosphotyrosine. Position 625 is a phosphoserine (serine 625). Positions 659–681 are actin-binding; it reads LNKLMTNLRSTHPHFVRCIIPNE. Residue histidine 757 is modified to Pros-methylhistidine. Residues 761-775 form an actin-binding region; it reads KFGHTKVFFKAGLLG. The 30-residue stretch at 785 to 814 folds into the IQ domain; sequence LAQLITRTQARCRGFLARVEYQKMVERRES. Residues 843-1939 are a coiled coil; sequence LLKSAETEKE…EVHTKIISEE (1097 aa). Phosphoserine occurs at positions 1092 and 1096. Disordered stretches follow at residues 1125 to 1147 and 1153 to 1172; these read EIEAERASRAKAEKQRSDLSREL and RLEEAGGATSAQIEMNKKRE. The span at 1128–1147 shows a compositional bias: basic and acidic residues; that stretch reads AERASRAKAEKQRSDLSREL. Phosphoserine occurs at positions 1162 and 1237. Threonine 1241 carries the phosphothreonine modification. Residue serine 1243 is modified to Phosphoserine. At threonine 1255 the chain carries Phosphothreonine. Position 1261 is a phosphoserine (serine 1261). Phosphothreonine is present on residues threonine 1265 and threonine 1286. Serine 1288, serine 1292, serine 1303, and serine 1306 each carry phosphoserine. The residue at position 1464 (tyrosine 1464) is a Phosphotyrosine. Threonine 1467 is modified (phosphothreonine). At serine 1474 the chain carries Phosphoserine. A Phosphotyrosine modification is found at tyrosine 1492. Serine 1495 is modified (phosphoserine). A Phosphothreonine modification is found at threonine 1501. The residue at position 1514 (serine 1514) is a Phosphoserine. Threonine 1517 carries the post-translational modification Phosphothreonine. 6 positions are modified to phosphoserine: serine 1554, serine 1574, serine 1600, serine 1603, serine 1714, and serine 1726. Threonine 1730 and threonine 1736 each carry phosphothreonine. A Phosphoserine modification is found at serine 1739.

Belongs to the TRAFAC class myosin-kinesin ATPase superfamily. Myosin family. In terms of assembly, muscle myosin is a hexameric protein that consists of 2 heavy chain subunits (MHC), 2 alkali light chain subunits (MLC) and 2 regulatory light chain subunits (MLC-2). Interacts with SLC26A5.

It localises to the cytoplasm. It is found in the myofibril. Required for normal hearing. It plays a role in cochlear amplification of auditory stimuli, likely through the positive regulation of prestin (SLC26A5) activity and outer hair cell (OHC) electromotility. In Canis lupus familiaris (Dog), this protein is Myosin-1 (MYH1).